Consider the following 174-residue polypeptide: MSVMQNNSEKSKWFLPGILGGLATTMKHLLKNLFNQKKMMTLNYPEEKYEYSPRFKGNHVLTVKKDGSLRCTACMLCATNCPAECIKITAAEHNDPTVEKFPISYEIDILRCVFCGFCEEACPVDAIRLGPEWQTPGVNGANFIYDINHLAYRPNLKGGILTHVDDEERHKAGI.

4Fe-4S ferredoxin-type domains are found at residues 61-91 (LTVK…ITAA) and 103-132 (ISYE…LGPE). [4Fe-4S] cluster contacts are provided by Cys-71, Cys-74, Cys-77, Cys-81, Cys-112, Cys-115, Cys-118, and Cys-122.

Belongs to the complex I 23 kDa subunit family. In terms of assembly, NDH-1 is composed of 14 different subunits. Subunits NuoA, H, J, K, L, M, N constitute the membrane sector of the complex. The cofactor is [4Fe-4S] cluster.

The protein localises to the cell inner membrane. The catalysed reaction is a quinone + NADH + 5 H(+)(in) = a quinol + NAD(+) + 4 H(+)(out). Its function is as follows. NDH-1 shuttles electrons from NADH, via FMN and iron-sulfur (Fe-S) centers, to quinones in the respiratory chain. The immediate electron acceptor for the enzyme in this species is believed to be ubiquinone. Couples the redox reaction to proton translocation (for every two electrons transferred, four hydrogen ions are translocated across the cytoplasmic membrane), and thus conserves the redox energy in a proton gradient. The chain is NADH-quinone oxidoreductase subunit I from Bdellovibrio bacteriovorus (strain ATCC 15356 / DSM 50701 / NCIMB 9529 / HD100).